Reading from the N-terminus, the 296-residue chain is Elongation factor Ts (296 aa).

Residues 82–85 (TDFV) are involved in Mg(2+) ion dislocation from EF-Tu.

This sequence belongs to the EF-Ts family.

The protein resides in the cytoplasm. Its function is as follows. Associates with the EF-Tu.GDP complex and induces the exchange of GDP to GTP. It remains bound to the aminoacyl-tRNA.EF-Tu.GTP complex up to the GTP hydrolysis stage on the ribosome. This is Elongation factor Ts from Coxiella burnetii (strain CbuG_Q212) (Coxiella burnetii (strain Q212)).